The primary structure comprises 2223 residues: Sperm-associated antigen 17 (2223 aa).

Basic and acidic residues-rich tracts occupy residues 144 to 172 (RENE…EKKA) and 200 to 212 (RRGE…RYID). The disordered stretch occupies residues 144–214 (RENEKKVIED…DHTNRYIDDE (71 aa)). The stretch at 266–295 (NQQQEVLLQSEDLEAEKLKKENAIKELKTF) forms a coiled coil. 6 disordered regions span residues 387–416 (MPTS…PPPV), 680–710 (MSVQ…LNNL), 731–762 (PQHE…PKKM), 950–1015 (EERL…EPKI), 1179–1212 (GKIK…PEPV), and 1345–1378 (ETIP…PPPE). 3 stretches are compositionally biased toward basic and acidic residues: residues 743-756 (EIKD…DSHE), 950-999 (EERL…EQVK), and 1182-1205 (KGKE…KKEE). Positions 940–966 (WKEEQHRLAEEERLREEKKAEKKGKEA) form a coiled coil. Residues 1345-1354 (ETIPSEITNT) are compositionally biased toward polar residues. Residues 1874–1907 (RHTASSKRWKEKIDKTRKEIETTQNYLMDIKNRI) are a coiled coil. Disordered regions lie at residues 1938-1957 (TKKN…DLNL) and 1962-2008 (HKVS…SYEP). Over residues 1988–1998 (TAQNQTENLTK) the composition is skewed to polar residues.

As to quaternary structure, interacts (via the C-terminus) with SPAG6; the interaction probably occurs on polymerized microtubules. In terms of tissue distribution, highly expressed in testis. Expressed in organs that contain cilia-bearing cells including brain, oviduct, lung, and uterus.

It is found in the cytoplasm. The protein localises to the cytoskeleton. It localises to the flagellum axoneme. Its subcellular location is the cytoplasmic vesicle. The protein resides in the secretory vesicle. It is found in the acrosome. The protein localises to the golgi apparatus. Component of the central pair apparatus of ciliary axonemes. Plays a critical role in the function and structure of motile cilia. May play a role in endochondral bone formation, most likely because of a function in primary cilia of chondrocytes and osteoblasts. Essential for normal spermatogenesis and male fertility. Required for normal manchette structure, transport of proteins along the manchette microtubules and formation of the sperm head and flagellum. Essential for sperm flagellum development and proper assembly of the respiratory motile cilia central pair apparatus, but not the brain ependymal cilia. The protein is Sperm-associated antigen 17 (SPAG17) of Homo sapiens (Human).